A 209-amino-acid polypeptide reads, in one-letter code: NADH-ubiquinone oxidoreductase subunit 9 (209 aa).

This sequence belongs to the complex I 30 kDa subunit family. In terms of assembly, complex I is composed of about 45 different subunits.

The protein resides in the mitochondrion inner membrane. The catalysed reaction is a ubiquinone + NADH + 5 H(+)(in) = a ubiquinol + NAD(+) + 4 H(+)(out). In terms of biological role, core subunit of the mitochondrial membrane respiratory chain NADH dehydrogenase (Complex I) that is believed to belong to the minimal assembly required for catalysis. Complex I functions in the transfer of electrons from NADH to the respiratory chain. The immediate electron acceptor for the enzyme is believed to be ubiquinone. In Dictyostelium discoideum (Social amoeba), this protein is NADH-ubiquinone oxidoreductase subunit 9 (nad9).